Here is a 64-residue protein sequence, read N- to C-terminus: MPKMKTNKGAAKRFKKTASGYKFKQAGLRHILTKRRTKVKRHLRAKCMIAASDIKSVKKLLRHG.

It belongs to the bacterial ribosomal protein bL35 family.

This chain is Large ribosomal subunit protein bL35, found in Colwellia psychrerythraea (strain 34H / ATCC BAA-681) (Vibrio psychroerythus).